The chain runs to 486 residues: ATP-dependent rRNA helicase RRP3 (486 aa).

Positions 1–58 (MNGAKRRKVAQDTPRNTKPVAQEKPARAEPKPSSDEESEEESATLEEPSAEETAVDAP) are disordered. The segment covering 24–34 (KPARAEPKPSS) has biased composition (basic and acidic residues). Acidic residues predominate over residues 35 to 54 (DEESEEESATLEEPSAEETA). The Q motif motif lies at 60–88 (KTFKDLGVNDALCEACEKLNYKYPTPIQE). The Helicase ATP-binding domain maps to 91-262 (IPVALQGRDI…RASLRDPVKV (172 aa)). 104–111 (AETGSGKT) is an ATP binding site. The DEAD box motif lies at 210–213 (DEAD). Positions 286–434 (QKDVHLIYLI…EYPTEKEEVM (149 aa)) constitute a Helicase C-terminal domain. 2 stretches are compositionally biased toward basic and acidic residues: residues 451 to 460 (MKSFTEERGK) and 476 to 486 (RGRDDMDREEG). Positions 451 to 486 (MKSFTEERGKKGSTLKGGRGKKGGKRGRDDMDREEG) are disordered.

Belongs to the DEAD box helicase family. DDX47/RRP3 subfamily. In terms of assembly, interacts with the SSU processome.

The protein resides in the nucleus. It catalyses the reaction ATP + H2O = ADP + phosphate + H(+). Functionally, ATP-dependent rRNA helicase required for pre-ribosomal RNA processing. Involved in the maturation of the 35S-pre-rRNA and to its cleavage to mature 18S rRNA. The sequence is that of ATP-dependent rRNA helicase RRP3 from Gibberella zeae (strain ATCC MYA-4620 / CBS 123657 / FGSC 9075 / NRRL 31084 / PH-1) (Wheat head blight fungus).